Reading from the N-terminus, the 181-residue chain is Ribulose bisphosphate carboxylase small subunit 2B, chloroplastic (181 aa).

The transit peptide at Met1 to Ser54 directs the protein to the chloroplast.

It belongs to the RuBisCO small chain family. In terms of assembly, heterohexadecamer of 8 large and 8 small subunits.

It localises to the plastid. The protein resides in the chloroplast. RuBisCO catalyzes two reactions: the carboxylation of D-ribulose 1,5-bisphosphate, the primary event in carbon dioxide fixation, as well as the oxidative fragmentation of the pentose substrate. Both reactions occur simultaneously and in competition at the same active site. Although the small subunit is not catalytic it is essential for maximal activity. The protein is Ribulose bisphosphate carboxylase small subunit 2B, chloroplastic (RBCS-2B) of Arabidopsis thaliana (Mouse-ear cress).